The sequence spans 428 residues: MLRSLPASLALVAAFASKASAHAAFWDKSMYGFNVTAQTFPYDNRPQVPLYNMTFDQWWFHGHKDYPPNEGDFFELPAGGEVNSIISCDKGATPFYESSPGGDSGYGSNSPCPGQPMSEYHTTGIDDVKGCCMAIAYKPDVNDVQPDDFVVFSCNSTCVWEMNTKFEIPKLPACPEGGCHCAWFWIHSYDSGAEQIYMNGFKCKVTGDVGTQPLGKPAVPRRCGADPDHGKPDPTPGNCTIGAKTPMYWYQREGNNMFEDTYDAPYYNPLYGFNDGAQNDIFMDGVIASLASSGTGSSPTSTVDSSSSAAAASTSYPAQPTSSTQDAPGSSAYPSSSSDSVNSPTTQPYPASSASSTSEAQTTPAAVPTSVATEASSSPIASTTVDEAVVSSSTVGSINPTRSCKPRPSGVAAQKKKRKHARHLHNAH.

Positions 1–21 are cleaved as a signal peptide; the sequence is MLRSLPASLALVAAFASKASA. N-linked (GlcNAc...) asparagine glycosylation is found at Asn-34 and Asn-52. Intrachain disulfides connect Cys-88/Cys-112, Cys-131/Cys-158, Cys-174/Cys-179, Cys-181/Cys-203, and Cys-223/Cys-239. Residue Asn-155 is glycosylated (N-linked (GlcNAc...) asparagine). Disordered stretches follow at residues 216-239 and 292-428; these read KPAV…PGNC and SSGT…HNAH. A compositionally biased stretch (basic and acidic residues) spans 223-232; the sequence is CGADPDHGKP. N-linked (GlcNAc...) asparagine glycosylation is present at Asn-238. Over residues 292–379 the composition is skewed to low complexity; that stretch reads SSGTGSSPTS…SVATEASSSP (88 aa). The segment covering 380-402 has biased composition (polar residues); the sequence is IASTTVDEAVVSSSTVGSINPTR. Residues 414 to 428 show a composition bias toward basic residues; that stretch reads QKKKRKHARHLHNAH.

Cu(2+) is required as a cofactor.

The protein localises to the secreted. Its function is as follows. Lytic polysaccharide monooxygenase (LPMO) showing oxidase and peroxidase activities that are common for LPMOs. Catalysis by LPMOs requires the reduction of the active-site copper from Cu(II) to Cu(I) by a reducing agent and H(2)O(2) or O(2) as a cosubstrate. Shows no activity on cellulose-associated xylan or any other tested polysaccharide substrate, meaning that the substrate rremains unknown. This chain is AA14 family lytic polysaccharide monooxygenase A, found in Trametes coccinea (strain BRFM310) (Pycnoporus coccineus).